A 159-amino-acid polypeptide reads, in one-letter code: MHQTHAIQRLEVLPSFSNESPTSRETSESWTNQDDIFYAYASMSPGAEHRGTTQLLRFQLAPIKKLEGSLQTHFLLSSLHPRMTFPGRAGGGEAGSRPPRRPWAGILILQLPSTRGGRRSGHGAVRSWGPWKVVAEQPVGGTDPPAHGGRGRPSPNENT.

2 disordered regions span residues 1-29 (MHQT…TSES) and 114-159 (TRGG…NENT). The span at 15–29 (SFSNESPTSRETSES) shows a compositional bias: polar residues.

This is an uncharacterized protein from Homo sapiens (Human).